We begin with the raw amino-acid sequence, 159 residues long: Phosphopantetheine adenylyltransferase (159 aa).

Residue Ser9 coordinates substrate. ATP contacts are provided by residues Ser9–Phe10 and His17. Lys41, Leu73, and Lys87 together coordinate substrate. ATP contacts are provided by residues Gly88–Arg90, Glu98, and Tyr122–Ser128.

This sequence belongs to the bacterial CoaD family. Homohexamer. Mg(2+) is required as a cofactor.

It is found in the cytoplasm. The catalysed reaction is (R)-4'-phosphopantetheine + ATP + H(+) = 3'-dephospho-CoA + diphosphate. The protein operates within cofactor biosynthesis; coenzyme A biosynthesis; CoA from (R)-pantothenate: step 4/5. Reversibly transfers an adenylyl group from ATP to 4'-phosphopantetheine, yielding dephospho-CoA (dPCoA) and pyrophosphate. This Streptomyces griseus subsp. griseus (strain JCM 4626 / CBS 651.72 / NBRC 13350 / KCC S-0626 / ISP 5235) protein is Phosphopantetheine adenylyltransferase.